The primary structure comprises 479 residues: MDPSRHTHVMLVSFPGQGHVNPLLRLGKLIASKGLLVTFVTTEKPWGKKMRQANKIQDGVLKPVGLGFIRFEFFSDGFADDDEKRFDFDAFRPHLEAVGKQEIKNLVKRYNKEPVTCLINNAFVPWVCDVAEELHIPSAVLWVQSCACLTAYYYYHHRLVKFPTKTEPDISVEIPCLPLLKHDEIPSFLHPSSPYTAFGDIILDQLKRFENHKSFYLFIDTFRELEKDIMDHMSQLCPQAIISPVGPLFKMAQTLSSDVKGDISEPASDCMEWLDSREPSSVVYISFGTIANLKQEQMEEIAHGVLSSGLSVLWVVRPPMEGTFVEPHVLPRELEEKGKIVEWCPQERVLAHPAIACFLSHCGWNSTMEALTAGVPVVCFPQWGDQVTDAVYLADVFKTGVRLGRGAAEEMIVSREVVAEKLLEATVGEKAVELRENARRWKAEAEAAVADGGSSDMNFKEFVDKLVTKHVTREDNGEH.

Residue His19 is the Proton acceptor of the active site. His19 is a binding site for an anthocyanidin. UDP-alpha-D-glucose contacts are provided by Gln346, His361, Trp364, Asn365, Ser366, and Glu369. Gly384 contributes to the an anthocyanidin binding site. The UDP-alpha-D-glucose site is built by Asp385 and Gln386.

It belongs to the UDP-glycosyltransferase family.

The catalysed reaction is (E)-4-coumarate + UDP-alpha-D-glucose = 4-O-(beta-D-glucosyl)-trans-4-coumarate + UDP + H(+). It carries out the reaction (E)-ferulate + UDP-alpha-D-glucose = 1-O-[(E)-feruloyl]-beta-D-glucose + UDP. The enzyme catalyses (E)-caffeate + UDP-alpha-D-glucose = 1-O-[(E)-caffeoyl]-beta-D-glucose + UDP. It catalyses the reaction (E)-sinapate + UDP-alpha-D-glucose = 1-O-(trans-sinapoyl)-beta-D-glucose + UDP. The catalysed reaction is (E)-cinnamate + UDP-alpha-D-glucose = 1-O-(trans-cinnamoyl)-beta-D-glucose + UDP. UDP-glucosyltransferase that forms glucose esters with phenylpropanoids. Glucosylates 4-coumarate, ferulate, caffeate, sinapate and cinnamate. The protein is UDP-glycosyltransferase 84A3 of Arabidopsis thaliana (Mouse-ear cress).